We begin with the raw amino-acid sequence, 185 residues long: Ribosome-recycling factor (185 aa).

It belongs to the RRF family.

It is found in the cytoplasm. Responsible for the release of ribosomes from messenger RNA at the termination of protein biosynthesis. May increase the efficiency of translation by recycling ribosomes from one round of translation to another. The polypeptide is Ribosome-recycling factor (Symbiobacterium thermophilum (strain DSM 24528 / JCM 14929 / IAM 14863 / T)).